A 314-amino-acid polypeptide reads, in one-letter code: DNA-directed RNA polymerase subunit alpha (314 aa).

The interval 1-228 is alpha N-terminal domain (alpha-NTD); it reads MIEIEKPKIE…EHLNIFVGLT (228 aa). Residues 245 to 314 are alpha C-terminal domain (alpha-CTD); the sequence is KEKVLEMTIE…ELGLSLRKDD (70 aa).

The protein belongs to the RNA polymerase alpha chain family. As to quaternary structure, homodimer. The RNAP catalytic core consists of 2 alpha, 1 beta, 1 beta' and 1 omega subunit. When a sigma factor is associated with the core the holoenzyme is formed, which can initiate transcription.

The enzyme catalyses RNA(n) + a ribonucleoside 5'-triphosphate = RNA(n+1) + diphosphate. Its function is as follows. DNA-dependent RNA polymerase catalyzes the transcription of DNA into RNA using the four ribonucleoside triphosphates as substrates. In Geobacillus kaustophilus (strain HTA426), this protein is DNA-directed RNA polymerase subunit alpha.